The chain runs to 880 residues: Valine--tRNA ligase (880 aa).

A 'HIGH' region motif is present at residues P48 to H58. A 'KMSKS' region motif is present at residues K527 to S531. An ATP-binding site is contributed by K530. Coiled-coil stretches lie at residues K717–N741 and L810–K880.

Belongs to the class-I aminoacyl-tRNA synthetase family. ValS type 1 subfamily. In terms of assembly, monomer.

The protein resides in the cytoplasm. It catalyses the reaction tRNA(Val) + L-valine + ATP = L-valyl-tRNA(Val) + AMP + diphosphate. Catalyzes the attachment of valine to tRNA(Val). As ValRS can inadvertently accommodate and process structurally similar amino acids such as threonine, to avoid such errors, it has a 'posttransfer' editing activity that hydrolyzes mischarged Thr-tRNA(Val) in a tRNA-dependent manner. This chain is Valine--tRNA ligase, found in Clostridium tetani (strain Massachusetts / E88).